We begin with the raw amino-acid sequence, 555 residues long: Protein peste (555 aa).

The Cytoplasmic segment spans residues 1 to 7; sequence MTSRTRH. The chain crosses the membrane as a helical span at residues 8–28; sequence CARLGIVLLGICCIASGIYLF. Residues 29 to 434 are Extracellular-facing; the sequence is RNWIDMFTRM…VRVSEEIAAD (406 aa). N-linked (GlcNAc...) asparagine glycosylation is found at asparagine 70, asparagine 110, asparagine 129, asparagine 213, asparagine 242, asparagine 312, and asparagine 342. Residues 435-455 traverse the membrane as a helical segment; sequence IALVPLIVLLGQIVTGILLAG. The Cytoplasmic portion of the chain corresponds to 456–555; it reads GLICTCWYPT…SEDSPDVVVR (100 aa).

It belongs to the CD36 family.

It is found in the cell membrane. (Microbial infection) Plays a role in mycobacterial infection. Mediates infection by M.fortuitum and uptake of M.smegmatis. This chain is Protein peste, found in Drosophila melanogaster (Fruit fly).